The following is a 632-amino-acid chain: tRNA uridine 5-carboxymethylaminomethyl modification enzyme MnmG (632 aa).

Residues 15 to 20 (GAGHAG), Ile-127, and Ser-182 contribute to the FAD site. 276-290 (GPRYCPSIEDKIVRF) contacts NAD(+). Gln-373 contributes to the FAD binding site.

It belongs to the MnmG family. In terms of assembly, homodimer. Heterotetramer of two MnmE and two MnmG subunits. The cofactor is FAD.

The protein resides in the cytoplasm. Its function is as follows. NAD-binding protein involved in the addition of a carboxymethylaminomethyl (cmnm) group at the wobble position (U34) of certain tRNAs, forming tRNA-cmnm(5)s(2)U34. The protein is tRNA uridine 5-carboxymethylaminomethyl modification enzyme MnmG of Streptococcus pyogenes serotype M4 (strain MGAS10750).